Reading from the N-terminus, the 590-residue chain is Aspartate--tRNA(Asp/Asn) ligase (590 aa).

Residue glutamate 175 coordinates L-aspartate. The interval 199-202 (QQYK) is aspartate. 2 residues coordinate L-aspartate: arginine 221 and histidine 450. 221 to 223 (RDE) is an ATP binding site. Glutamate 484 lines the ATP pocket. Position 491 (arginine 491) interacts with L-aspartate. 536–539 (GIDR) contacts ATP.

It belongs to the class-II aminoacyl-tRNA synthetase family. Type 1 subfamily. In terms of assembly, homodimer.

It is found in the cytoplasm. The enzyme catalyses tRNA(Asx) + L-aspartate + ATP = L-aspartyl-tRNA(Asx) + AMP + diphosphate. Aspartyl-tRNA synthetase with relaxed tRNA specificity since it is able to aspartylate not only its cognate tRNA(Asp) but also tRNA(Asn). Reaction proceeds in two steps: L-aspartate is first activated by ATP to form Asp-AMP and then transferred to the acceptor end of tRNA(Asp/Asn). In Azorhizobium caulinodans (strain ATCC 43989 / DSM 5975 / JCM 20966 / LMG 6465 / NBRC 14845 / NCIMB 13405 / ORS 571), this protein is Aspartate--tRNA(Asp/Asn) ligase.